A 301-amino-acid chain; its full sequence is 4-hydroxy-tetrahydrodipicolinate synthase (301 aa).

Thr-46 serves as a coordination point for pyruvate. The Proton donor/acceptor role is filled by Tyr-134. Lys-162 acts as the Schiff-base intermediate with substrate in catalysis. Ile-203 lines the pyruvate pocket.

This sequence belongs to the DapA family. In terms of assembly, homotetramer; dimer of dimers.

It localises to the cytoplasm. It catalyses the reaction L-aspartate 4-semialdehyde + pyruvate = (2S,4S)-4-hydroxy-2,3,4,5-tetrahydrodipicolinate + H2O + H(+). It participates in amino-acid biosynthesis; L-lysine biosynthesis via DAP pathway; (S)-tetrahydrodipicolinate from L-aspartate: step 3/4. Catalyzes the condensation of (S)-aspartate-beta-semialdehyde [(S)-ASA] and pyruvate to 4-hydroxy-tetrahydrodipicolinate (HTPA). The polypeptide is 4-hydroxy-tetrahydrodipicolinate synthase (Anaplasma marginale (strain Florida)).